The chain runs to 135 residues: Large ribosomal subunit protein uL16c (135 aa).

This sequence belongs to the universal ribosomal protein uL16 family. As to quaternary structure, part of the 50S ribosomal subunit.

It is found in the plastid. The protein resides in the chloroplast. This chain is Large ribosomal subunit protein uL16c, found in Morus indica (Mulberry).